The primary structure comprises 116 residues: Protein RALF-like 33 (116 aa).

The N-terminal stretch at 1–23 (MRGLSTKPVAIIIAILTVHFLFA) is a signal peptide. A propeptide spans 24–67 (AVTSQSSGDFVPIESKCNGTIAECSLSTAEEEFEMDSEINRRIL) (removed in mature form). The N-linked (GlcNAc...) asparagine glycan is linked to Asn41. Cystine bridges form between Cys85–Cys95 and Cys108–Cys114.

It belongs to the plant rapid alkalinization factor (RALF) family. Proteolytically cleaved, probably by S1P, a subtilisin-like serine protease (subtilase). In terms of tissue distribution, expressed in roots, stems, leaves and plants.

The protein localises to the secreted. Cell signaling peptide that may regulate plant stress, growth, and development. Mediates a rapid alkalinization of extracellular space by mediating a transient increase in the cytoplasmic Ca(2+) concentration leading to a calcium-dependent signaling events through a cell surface receptor and a concomitant activation of some intracellular mitogen-activated protein kinases. The polypeptide is Protein RALF-like 33 (RALFL33) (Arabidopsis thaliana (Mouse-ear cress)).